The chain runs to 202 residues: MSQKILFATGNKGKARELKEAFKTAGVDVEIITNSDLDNPPHPIESGRTFEANAKIKAHELADYSKLPTIADDSGLMVDALNGEPGVRSARYAGEAHNDAKNNAKLLANLGGIPDEKRTAKFWTTIVVSMPGEFEKDLVVSGTCSGRILAAPRGDDGFGYDPLFFVPKKDKTFAQMTTDEKNEISHRGNVVRELLKVLPALA.

9-14 (TGNKGK) is a substrate binding site. The active-site Proton acceptor is the aspartate 73. Aspartate 73 contributes to the Mg(2+) binding site. Residues serine 74, 158 to 161 (FGYD), lysine 181, and 186 to 187 (HR) contribute to the substrate site.

This sequence belongs to the HAM1 NTPase family. As to quaternary structure, homodimer. Mg(2+) serves as cofactor.

It catalyses the reaction XTP + H2O = XMP + diphosphate + H(+). The enzyme catalyses dITP + H2O = dIMP + diphosphate + H(+). The catalysed reaction is ITP + H2O = IMP + diphosphate + H(+). Functionally, pyrophosphatase that catalyzes the hydrolysis of nucleoside triphosphates to their monophosphate derivatives, with a high preference for the non-canonical purine nucleotides XTP (xanthosine triphosphate), dITP (deoxyinosine triphosphate) and ITP. Seems to function as a house-cleaning enzyme that removes non-canonical purine nucleotides from the nucleotide pool, thus preventing their incorporation into DNA/RNA and avoiding chromosomal lesions. This chain is dITP/XTP pyrophosphatase, found in Lactobacillus acidophilus (strain ATCC 700396 / NCK56 / N2 / NCFM).